The following is a 239-amino-acid chain: Uridylate kinase (239 aa).

An ATP-binding site is contributed by Lys-13–Gly-16. Gly-55 is a binding site for UMP. 2 residues coordinate ATP: Gly-56 and Arg-60. Residues Asp-75 and Thr-136 to Thr-143 each bind UMP. The ATP site is built by Thr-163, Asn-164, Tyr-169, and Asp-172.

Belongs to the UMP kinase family. In terms of assembly, homohexamer.

The protein resides in the cytoplasm. It catalyses the reaction UMP + ATP = UDP + ADP. It functions in the pathway pyrimidine metabolism; CTP biosynthesis via de novo pathway; UDP from UMP (UMPK route): step 1/1. Its activity is regulated as follows. Inhibited by UTP. In terms of biological role, catalyzes the reversible phosphorylation of UMP to UDP. This chain is Uridylate kinase, found in Neisseria gonorrhoeae (strain ATCC 700825 / FA 1090).